Reading from the N-terminus, the 665-residue chain is E3 ubiquitin-protein ligase cblA (665 aa).

The disordered stretch occupies residues 30-50 (NNNNNINNNNNNNNINSNNNG). Residues 109–231 (TSLVNYIHYE…NNENNNNNNN (123 aa)) form a 4H region. Residues 109–400 (TSLVNYIHYE…PDIFKSILSF (292 aa)) form the Cbl-PTB domain. The segment at 232 to 306 (NYNPYELLSN…FKLSVFIKWF (75 aa)) is EF-hand-like. Ca(2+) is bound by residues Asp-287, Thr-289, Asp-291, and Tyr-293. The interval 307–400 (GALPVSLGIF…PDIFKSILSF (94 aa)) is SH2-like. Disordered stretches follow at residues 437–456 (ENNN…INTF) and 467–609 (DSSN…NNNN). Positions 467–478 (DSSNSSDTNKSP) are enriched in low complexity. A coiled-coil region spans residues 479 to 544 (TKSRKSSFKN…NNNNNNNNNN (66 aa)). Residues 486–512 (FKNDKDKKEKEKEKGKDKEKEKERVSD) are compositionally biased toward basic and acidic residues. Composition is skewed to low complexity over residues 530–561 (NNNN…NNNN) and 571–609 (TSNG…NNNN). The segment at 618-653 (CTVCMDNEINTVFLECGHLSCCSLCSVKLKKCPICR) adopts an RING-type zinc-finger fold.

Ubiquitinated.

Its subcellular location is the cytoplasm. It localises to the nucleus. It carries out the reaction S-ubiquitinyl-[E2 ubiquitin-conjugating enzyme]-L-cysteine + [acceptor protein]-L-lysine = [E2 ubiquitin-conjugating enzyme]-L-cysteine + N(6)-ubiquitinyl-[acceptor protein]-L-lysine.. It functions in the pathway protein modification; protein ubiquitination. Functionally, acts as an E3 ubiquitin-protein ligase, which accepts ubiquitin from specific E2 ubiquitin-conjugating enzymes, and then transfers it to substrates promoting their degradation by the proteasome. Up-regulates STATc tyrosine phosphorylation via an inhibitory effect on ptpC accumulation. Recognizes activated receptor tyrosine kinases, RTKs and terminates signaling. This Dictyostelium discoideum (Social amoeba) protein is E3 ubiquitin-protein ligase cblA (cblA-1).